The sequence spans 331 residues: Protein PER1 homolog (331 aa).

The signal sequence occupies residues 1-24 (MRVLRNFTIFFLFTALSLFRQISA). Over 25–100 (SAGDLHPVYV…QYHGKWYFIR (76 aa)) the chain is Lumenal. A helical transmembrane segment spans residues 101 to 121 (VFGIQELFSVFFSMLNFMIHY). Over 122–139 (NGYHIMRRCIPDEHPAKR) the chain is Cytoplasmic. A helical membrane pass occupies residues 140-160 (LCLSWAIVGMNAWVWSSVFHI). Residues 161 to 168 (RDTPITEK) are Lumenal-facing. A helical membrane pass occupies residues 169 to 189 (LDYFSAGAFVLFGSYCTLILM). At 190–199 (LRLDQLPGGK) the chain is on the cytoplasmic side. A helical membrane pass occupies residues 200-220 (LLCWIIGVIFIAAFIAHVSYL). At 221–232 (SFYSFDYGYNMK) the chain is on the lumenal side. Residues 233–250 (ANVAVGLVQNILWYYYSW) form a helical membrane-spanning segment. Residues 251 to 263 (SNRNSGLYWTRWP) lie on the Cytoplasmic side of the membrane. The helical transmembrane segment at 264–284 (AYIVTSLMLATSLELFDFSPI) threads the bilayer. Residues 285 to 289 (ANLID) lie on the Lumenal side of the membrane. The chain crosses the membrane as a helical span at residues 290 to 310 (AHALWHLSTVPITHYLYGFVV). Topologically, residues 311–331 (RKCSYDLTKGTFKIKAYDSSR) are cytoplasmic.

This sequence belongs to the PGAP3/PER1 family.

Its subcellular location is the endoplasmic reticulum membrane. The protein resides in the vacuole membrane. Functionally, involved in the lipid remodeling steps of GPI-anchor maturation. Lipid remodeling steps consist in the generation of 2 saturated fatty chains at the sn-2 position of GPI-anchors proteins. Required for phospholipase A2 activity that removes an acyl-chain at the sn-2 position of GPI-anchors during the remodeling of GPI. Required for efficient transport of GPI-anchor proteins. This is Protein PER1 homolog from Schizosaccharomyces pombe (strain 972 / ATCC 24843) (Fission yeast).